The following is a 360-amino-acid chain: Photosystem II protein D1 (360 aa).

Transmembrane regions (helical) follow at residues 29–46 (YIGW…TAAS), 118–133 (HFLI…EWEL), and 142–156 (WIFV…AASA). H118 contacts chlorophyll a. W126 lines the pheophytin a pocket. The [CaMn4O5] cluster site is built by D170 and E189. Residues 197–218 (FHMAGVAGVFGGSLFSAMHGSL) traverse the membrane as a helical segment. H198 serves as a coordination point for chlorophyll a. Residues H215 and 264 to 265 (SF) each bind a quinone. H215 provides a ligand contact to Fe cation. Residue H272 coordinates Fe cation. Residues 274–288 (FLAAWPVVGIWLTAL) form a helical membrane-spanning segment. Residues H332, E333, D342, and A344 each coordinate [CaMn4O5] cluster. The propeptide occupies 345–360 (SNEILPVAISAPSVVG).

The protein belongs to the reaction center PufL/M/PsbA/D family. In terms of assembly, PSII is composed of 1 copy each of membrane proteins PsbA, PsbB, PsbC, PsbD, PsbE, PsbF, PsbH, PsbI, PsbJ, PsbK, PsbL, PsbM, PsbT, PsbX, PsbY, PsbZ, Psb30/Ycf12, at least 3 peripheral proteins of the oxygen-evolving complex and a large number of cofactors. It forms dimeric complexes. The cofactor is The D1/D2 heterodimer binds P680, chlorophylls that are the primary electron donor of PSII, and subsequent electron acceptors. It shares a non-heme iron and each subunit binds pheophytin, quinone, additional chlorophylls, carotenoids and lipids. D1 provides most of the ligands for the Mn4-Ca-O5 cluster of the oxygen-evolving complex (OEC). There is also a Cl(-1) ion associated with D1 and D2, which is required for oxygen evolution. The PSII complex binds additional chlorophylls, carotenoids and specific lipids.. In terms of processing, tyr-161 forms a radical intermediate that is referred to as redox-active TyrZ, YZ or Y-Z. C-terminally processed by CTPA; processing is essential to allow assembly of the oxygen-evolving complex and thus photosynthetic growth.

Its subcellular location is the plastid. The protein resides in the chloroplast thylakoid membrane. It carries out the reaction 2 a plastoquinone + 4 hnu + 2 H2O = 2 a plastoquinol + O2. In terms of biological role, photosystem II (PSII) is a light-driven water:plastoquinone oxidoreductase that uses light energy to abstract electrons from H(2)O, generating O(2) and a proton gradient subsequently used for ATP formation. It consists of a core antenna complex that captures photons, and an electron transfer chain that converts photonic excitation into a charge separation. The D1/D2 (PsbA/PsbD) reaction center heterodimer binds P680, the primary electron donor of PSII as well as several subsequent electron acceptors. This chain is Photosystem II protein D1, found in Ectocarpus siliculosus (Brown alga).